A 171-amino-acid polypeptide reads, in one-letter code: Putative metal-dependent hydrolase BH0277 (171 aa).

Zn(2+) is bound by residues His64, His155, and His159.

This sequence belongs to the metal hydrolase YfiT family. As to quaternary structure, homodimer. Zn(2+) serves as cofactor.

The protein localises to the cytoplasm. Its function is as follows. Possible metal-dependent hydrolase. The sequence is that of Putative metal-dependent hydrolase BH0277 from Halalkalibacterium halodurans (strain ATCC BAA-125 / DSM 18197 / FERM 7344 / JCM 9153 / C-125) (Bacillus halodurans).